Consider the following 753-residue polypeptide: Polyribonucleotide nucleotidyltransferase (753 aa).

Mg(2+) is bound by residues aspartate 543 and aspartate 549. The KH domain occupies 609 to 668; the sequence is PRITTVKIPVAKIGELIGPKGKNINALTEETGANISIEDDGTVFISAADGASAEAAIEKI. An S1 motif domain is found at 680–749; the sequence is GERFLGTVVK…NRGKISLVPV (70 aa).

Belongs to the polyribonucleotide nucleotidyltransferase family. The cofactor is Mg(2+).

The protein resides in the cytoplasm. The enzyme catalyses RNA(n+1) + phosphate = RNA(n) + a ribonucleoside 5'-diphosphate. Its function is as follows. Involved in mRNA degradation. Catalyzes the phosphorolysis of single-stranded polyribonucleotides processively in the 3'- to 5'-direction. The protein is Polyribonucleotide nucleotidyltransferase of Corynebacterium glutamicum (strain ATCC 13032 / DSM 20300 / JCM 1318 / BCRC 11384 / CCUG 27702 / LMG 3730 / NBRC 12168 / NCIMB 10025 / NRRL B-2784 / 534).